Here is a 254-residue protein sequence, read N- to C-terminus: MTRRRRIYEGKAKILFEGPEPGTLVQYFKDDATAFNAQKKGVITGKGVLNNRISEYLMMKLGEIGIPTHFVRRLNMREQLIREVEIIPIEVVVRNVAAGSLTKRFGIPEGTQLPRSIVEYYFKNDELGDPMVSEEHITAFGWAAPQDLDDMLALALRVNDYLSGLFLGIGLRLVDFKVEFGRLWENEEMRIILADEISPDNCRLWDVKTNEKLDKDRFRQDLGNVAEAYQEVAKRLGIMPEAGPGDMKAPKLVQ.

It belongs to the SAICAR synthetase family.

The catalysed reaction is 5-amino-1-(5-phospho-D-ribosyl)imidazole-4-carboxylate + L-aspartate + ATP = (2S)-2-[5-amino-1-(5-phospho-beta-D-ribosyl)imidazole-4-carboxamido]succinate + ADP + phosphate + 2 H(+). Its pathway is purine metabolism; IMP biosynthesis via de novo pathway; 5-amino-1-(5-phospho-D-ribosyl)imidazole-4-carboxamide from 5-amino-1-(5-phospho-D-ribosyl)imidazole-4-carboxylate: step 1/2. The polypeptide is Phosphoribosylaminoimidazole-succinocarboxamide synthase (Rhodospirillum centenum (strain ATCC 51521 / SW)).